Consider the following 415-residue polypeptide: Nacrein-like protein F (415 aa).

Asn-27 is a glycosylation site (N-linked (GlcNAc...) asparagine). In terms of domain architecture, Alpha-carbonic anhydrase spans 33-414 (AGFSYDRSIC…KNKVTVYKSF (382 aa)). 3 residues coordinate Zn(2+): His-132, His-134, and His-157. The segment at 201-297 (DEPDDEECKH…GENGHKHGCR (97 aa)) is disordered. A compositionally biased stretch (basic and acidic residues) spans 207–219 (ECKHILKGHHPDN). The segment covering 220–289 (NENGNGDNGN…NNGENGNNGE (70 aa)) has biased composition (low complexity). 22 repeat units span residues 225-227 (GDN), 228-230 (GNN), 231-233 (GYN), 234-236 (GDN), 237-239 (GNN), 240-242 (GDN), 243-245 (GNN), 246-248 (GYN), 249-251 (GDN), 252-254 (GNN), 255-257 (GVN), 258-260 (GNN), 261-263 (GYN), 264-266 (GDN), 267-269 (GNN), 270-272 (GDN), 273-275 (GNN), 276-278 (GEN), 279-281 (GNN), 282-284 (GEN), 285-286 (GN), and 288-290 (GEN). Residues 225-290 (GDNGNNGYNG…NGENGNNGEN (66 aa)) are 22 X 3 AA approximate tandem repeats of G-X-N. 355 to 356 (TT) is a substrate binding site.

It belongs to the alpha-carbonic anhydrase family. As to quaternary structure, homooligomer; disulfide-linked. May also be disulfide-linked to insoluble organic matrix. Zn(2+) serves as cofactor. Expressed in the mantle.

The protein localises to the secreted. The protein resides in the extracellular space. It is found in the extracellular matrix. It catalyses the reaction hydrogencarbonate + H(+) = CO2 + H2O. Its function is as follows. Acts as a negative regulator for calcification in the shells of mollusks. May function both as a calcium concentrator and as a carbonic anhydrase required for production of carbonate ions, which are assembled to CaCO(3) at mineralization sites. Is important for shell formation in both the calcitic prismatic layer and the aragonitic nacreous layer. Shows inhibitory activity of crystal formation when present in free state but, when attached to the insoluble matrix, may regulate the form and size of aragonite crystal. The protein is Nacrein-like protein F of Pinctada fucata (Akoya pearl oyster).